Consider the following 117-residue polypeptide: Urease subunit beta (117 aa).

A disordered region spans residues 95 to 117; the sequence is NAVNGKLDGGPHPGVPATERGAK.

Belongs to the urease beta subunit family. As to quaternary structure, heterotrimer of UreA (gamma), UreB (beta) and UreC (alpha) subunits. Three heterotrimers associate to form the active enzyme.

It is found in the cytoplasm. It carries out the reaction urea + 2 H2O + H(+) = hydrogencarbonate + 2 NH4(+). It functions in the pathway nitrogen metabolism; urea degradation; CO(2) and NH(3) from urea (urease route): step 1/1. In Pseudarthrobacter chlorophenolicus (strain ATCC 700700 / DSM 12829 / CIP 107037 / JCM 12360 / KCTC 9906 / NCIMB 13794 / A6) (Arthrobacter chlorophenolicus), this protein is Urease subunit beta.